Reading from the N-terminus, the 231-residue chain is (S)-2-haloacid dehalogenase 4A (231 aa).

Catalysis depends on Asp-11, which acts as the Nucleophile. Residues 12 to 13 (AY), Arg-42, and 119 to 120 (SN) each bind an (S)-2-haloacid. Positions 176–181 (SSNAWD) are important for catalytic activity.

This sequence belongs to the HAD-like hydrolase superfamily. S-2-haloalkanoic acid dehalogenase family.

The enzyme catalyses an (S)-2-haloacid + H2O = a (2R)-2-hydroxycarboxylate + a halide anion + H(+). It catalyses the reaction (S)-2-chloropropanoate + H2O = (R)-lactate + chloride + H(+). Functionally, catalyzes the hydrolytic dehalogenation of small (S)-2-haloalkanoic acids to yield the corresponding (R)-2-hydroxyalkanoic acids. Acts on acids of short chain lengths, C(2) to C(4), with inversion of configuration at C-3. Active with 2-halogenated carboxylic acids and converts only the S-isomer (or L-isomer) of 2-chloropropionic acid with inversion of configuration to produce R-lactate (or D-isomer). The sequence is that of (S)-2-haloacid dehalogenase 4A from Burkholderia cepacia (Pseudomonas cepacia).